A 932-amino-acid chain; its full sequence is Eukaryotic translation initiation factor 3 subunit A (932 aa).

One can recognise a PCI domain in the interval 309–492 (KPATANFVIL…NSISFSSDLF (184 aa)). A phosphoserine mark is found at S374 and S501. Residues 537 to 862 (LRKQQAEAAY…DEEISRKLAE (326 aa)) adopt a coiled-coil conformation. Residues 793–865 (AEEEAARAAE…ISRKLAEKAA (73 aa)) are compositionally biased toward basic and acidic residues. Residues 793-932 (AEEEAARAAE…PPSRRNQQQQ (140 aa)) are disordered. S874, S875, and S877 each carry phosphoserine. Residues 877–893 (SPGAWRRGGASAGGVSR) show a composition bias toward low complexity.

The protein belongs to the eIF-3 subunit A family. As to quaternary structure, component of the eukaryotic translation initiation factor 3 (eIF-3) complex. The eIF-3 complex appears to include tif32/eif3a, SPAC25G10.08/eif3b, tif33/eif3c, SPBC4C3.07/eif3f, tif35/eif3g and sum1/eif3i. This set of common subunits may also associate exclusively with either moe1/eif3d and int6/eif3e, or with SPAC821.05/eif3h and SPAC1751.03/eif3m. The eIF-3 complex may also include SPAC3A12.13c/eif3j.

It is found in the cytoplasm. Its function is as follows. RNA-binding component of the eukaryotic translation initiation factor 3 (eIF-3) complex, which is involved in protein synthesis of a specialized repertoire of mRNAs and, together with other initiation factors, stimulates binding of mRNA and methionyl-tRNAi to the 40S ribosome. The eIF-3 complex specifically targets and initiates translation of a subset of mRNAs involved in cell proliferation. This Schizosaccharomyces pombe (strain 972 / ATCC 24843) (Fission yeast) protein is Eukaryotic translation initiation factor 3 subunit A (tif32).